The primary structure comprises 724 residues: uncharacterized protein (724 aa).

Disordered regions lie at residues 97–131, 187–252, 309–434, and 454–473; these read RKSF…YPSP, ETKI…FETE, FETE…TSKL, and RGVE…VAEK. Positions 115 to 128 are enriched in polar residues; the sequence is TRSASYSESNNSFY. A coiled-coil region spans residues 187 to 217; that stretch reads ETKIGIEEENEESEILAEEKEEEDNDFSVLE. Over residues 193–212 the composition is skewed to acidic residues; that stretch reads EEENEESEILAEEKEEEDND. 2 stretches are compositionally biased toward basic and acidic residues: residues 223–252 and 309–322; these read QEIK…FETE and FETE…DHSE. Low complexity-rich tracts occupy residues 323-333 and 347-366; these read TTTSETDSTES and SPQT…SLRS. The segment covering 367–388 has biased composition (pro residues); that stretch reads QPPPPPPSPEHKAPAPPPPPPM. Polar residues predominate over residues 400-410; the sequence is FSKTHSTNGDN. Coiled coils occupy residues 495 to 522 and 649 to 678; these read SYFQ…HSFQ and MELA…RAKR.

This is an uncharacterized protein from Arabidopsis thaliana (Mouse-ear cress).